Consider the following 322-residue polypeptide: tRNA U34 carboxymethyltransferase (322 aa).

Carboxy-S-adenosyl-L-methionine is bound by residues lysine 91, tryptophan 105, lysine 110, glycine 129, 179–180 (LE), methionine 195, tyrosine 199, and arginine 314.

The protein belongs to the class I-like SAM-binding methyltransferase superfamily. CmoB family. In terms of assembly, homotetramer.

The catalysed reaction is carboxy-S-adenosyl-L-methionine + 5-hydroxyuridine(34) in tRNA = 5-carboxymethoxyuridine(34) in tRNA + S-adenosyl-L-homocysteine + H(+). Catalyzes carboxymethyl transfer from carboxy-S-adenosyl-L-methionine (Cx-SAM) to 5-hydroxyuridine (ho5U) to form 5-carboxymethoxyuridine (cmo5U) at position 34 in tRNAs. The chain is tRNA U34 carboxymethyltransferase from Pseudomonas paraeruginosa (strain DSM 24068 / PA7) (Pseudomonas aeruginosa (strain PA7)).